The primary structure comprises 77 residues: Cell division topological specificity factor (77 aa).

This sequence belongs to the MinE family.

In terms of biological role, prevents the cell division inhibition by proteins MinC and MinD at internal division sites while permitting inhibition at polar sites. This ensures cell division at the proper site by restricting the formation of a division septum at the midpoint of the long axis of the cell. This Helicobacter pylori (strain Shi470) protein is Cell division topological specificity factor.